We begin with the raw amino-acid sequence, 132 residues long: Small ribosomal subunit protein uS9 (132 aa).

The protein belongs to the universal ribosomal protein uS9 family.

The chain is Small ribosomal subunit protein uS9 from Leptospira borgpetersenii serovar Hardjo-bovis (strain JB197).